The primary structure comprises 146 residues: VHLTGEEKAAVTGLWSKVNVDEVGGEALGRLLVVYPWTQRFFDSFGDLSSPDAVMGNPKVKAHGKKVLNSFSEGLKNLDNLKGTFAKLSELHCDKLHVDPENFKLLGNVLVCVLAHHFGKEFTPQVQAAYQKVVAGVANALAHKYH.

Valine 1 bears the N-acetylvaline mark. A Globin domain is found at 2 to 146; it reads HLTGEEKAAV…VANALAHKYH (145 aa). Phosphothreonine is present on threonine 12. At serine 44 the chain carries Phosphoserine. Lysine 59 carries the N6-acetyllysine modification. Histidine 63 serves as a coordination point for heme b. Lysine 82 is subject to N6-acetyllysine. Residue histidine 92 participates in heme b binding. Residue cysteine 93 is modified to S-nitrosocysteine. N6-acetyllysine is present on lysine 144.

The protein belongs to the globin family. Heterotetramer of two alpha chains and two beta chains. In terms of tissue distribution, red blood cells.

Functionally, involved in oxygen transport from the lung to the various peripheral tissues. In Ailurus fulgens (Himalayan red panda), this protein is Hemoglobin subunit beta (HBB).